Reading from the N-terminus, the 208-residue chain is N-(5'-phosphoribosyl)anthranilate isomerase (208 aa).

The protein belongs to the TrpF family.

The enzyme catalyses N-(5-phospho-beta-D-ribosyl)anthranilate = 1-(2-carboxyphenylamino)-1-deoxy-D-ribulose 5-phosphate. It functions in the pathway amino-acid biosynthesis; L-tryptophan biosynthesis; L-tryptophan from chorismate: step 3/5. The protein is N-(5'-phosphoribosyl)anthranilate isomerase of Lactiplantibacillus plantarum (strain ATCC BAA-793 / NCIMB 8826 / WCFS1) (Lactobacillus plantarum).